The sequence spans 2146 residues: Conidial pigment polyketide synthase alb1 (2146 aa).

The segment at 8–244 (YLFGDQTISC…KAPGVSGPYH (237 aa)) is N-terminal acylcarrier protein transacylase domain (SAT). The 432-residue stretch at 375–806 (RSKIAIIGMS…GGNTALLMED (432 aa)) folds into the Ketosynthase family 3 (KS3) domain. Catalysis depends on for beta-ketoacyl synthase activity residues C547, H682, and H724. The segment at 911–1232 (GFVFTGQGAQ…LSTLHLAGVE (322 aa)) is malonyl-CoA:ACP transacylase (MAT) domain. S1001 functions as the For acyl/malonyl transferase activity in the catalytic mechanism. A product template (PT) domain region spans residues 1290–1602 (TTAAQKIVEC…ARKILDTVLP (313 aa)). Residues 1294–1427 (QKIVECREDG…VKLFNCAERE (134 aa)) form an N-terminal hotdog fold region. One can recognise a PKS/mFAS DH domain in the interval 1294-1598 (QKIVECREDG…FQALARKILD (305 aa)). H1326 functions as the Proton acceptor; for dehydratase activity in the catalytic mechanism. The interval 1453 to 1598 (AHRMQRGMVY…FQALARKILD (146 aa)) is C-terminal hotdog fold. D1511 functions as the Proton donor; for dehydratase activity in the catalytic mechanism. Residues 1611-1644 (GAPAPAPARPIGEKKAPPPIKVTGPPKPNPSNAR) form a disordered region. The segment covering 1627–1639 (PPPIKVTGPPKPN) has biased composition (pro residues). The Carrier 1 domain maps to 1647–1721 (SPVVARALEI…DFKAYLAEKG (75 aa)). S1681 is subject to O-(pantetheine 4'-phosphoryl)serine. Positions 1724–1769 (DSSSPEPSSEPESKFSFNSDASSEASSGLTTPGITSPVKHEAPKGG) are disordered. Over residues 1738 to 1750 (FSFNSDASSEASS) the composition is skewed to low complexity. A Carrier 2 domain is found at 1768–1845 (GGQNKVWKSI…AVQAALDLKP (78 aa)). S1805 is subject to O-(pantetheine 4'-phosphoryl)serine. The segment at 1892–2019 (KLFMFPDGSG…SIGLFGDGKR (128 aa)) is claisen cyclase domain. The active-site For Claisen cyclase activity is the S1962.

The protein resides in the endosome. The catalysed reaction is 6 malonyl-CoA + acetyl-CoA + 6 H(+) = naphtopyrone YWA1 + 6 CO2 + 7 CoA + H2O. It participates in pigment biosynthesis; melanin biosynthesis. Non-reducing polyketide synthase; part of the gene cluster that mediates the biosynthesis of dihydroxynaphthalene (DHN)-melanin, a bluish-green pigment and a structural component of the conidial wall. The first step of the pathway is the production of the heptaketide naphtopyrone YWA1 by the polyketide synthase alb1 though condensation of acetyl-CoA with malonyl-CoA. The naphtopyrone YWA1 is then converted to the pentaketide 1,3,6,8-tetrahydroxynaphthalene (1,3,6,8-THN) by the heptaketide hydrolyase ayg1 though chain-length shortening. 1,3,6,8-THN is substrate of the hydroxynaphthalene reductase arp2 to yield scytalone. The scytalone dehydratase arp1 then reduces scytalone to 1,3,8-THN. 1,3,8-THN is also substrate of the hydroxynaphthalene reductase arp2 to yield vermelone. Vermelone is further converted by the multicopper oxidase abr1 to 1,8-DHN. Finally the laccase abr2 transforms 1,8-DHN to DHN-melanin. DHN-melanin biosynthesis appears to be initiated in endosomes where early enzymes (abl1, ayg1, arp1 and arp2) localize, with exocytosis leading to melanin deposition on the cell surface where late enzymes (abr1 and abr2) localize. DHN-melanin is an important structural component of the outer cell wall and is required for the presence of conidial surface hydrophobins. DHN-melanin also plays a crucial role in fungal virulence, including a protective role against the host's immune defenses. DHN-melanin protects also conidia against amoeba predation. In Aspergillus fumigatus (strain ATCC MYA-4609 / CBS 101355 / FGSC A1100 / Af293) (Neosartorya fumigata), this protein is Conidial pigment polyketide synthase alb1.